Consider the following 651-residue polypeptide: Mitochondrial sodium/calcium exchanger protein (651 aa).

A helical membrane pass occupies residues 51–71 (VILIILGILYLIILFVIMSSI). Residues 72-91 (ADDFFCPAISGIVSHLRMSE) are Cytoplasmic-facing. A helical membrane pass occupies residues 92–112 (SIAGVTFLAFGNGAPDVFSSI). The Extracellular portion of the chain corresponds to 113–126 (SSVLTTPKPKADLA). The chain crosses the membrane as a helical span at residues 127 to 147 (LGDLFGTSIFVTTVVLAIIIF). The Cytoplasmic portion of the chain corresponds to 148–161 (TKSFKVAIIPTLRD). Residues 162 to 182 (LIFYMTTLAFIVFCFLKFDKI) traverse the membrane as a helical segment. Position 183 (Glu183) is a topological domain, extracellular. A helical membrane pass occupies residues 184–204 (VWMPATFLGIYGVYVVTVIIL). The Cytoplasmic segment spans residues 205–398 (GIYRTHRKKR…PSRDEFSEMN (194 aa)). Residues 399 to 419 (IFIKIVTVIKVVPVFFFKLTV) form a helical membrane-spanning segment. Topologically, residues 420-428 (PSNEMSWCK) are extracellular. Residues 429–449 (PLFILHCFASIQFALFSIQII) traverse the membrane as a helical segment. At 450–458 (TLKPFDGSP) the chain is on the cytoplasmic side. Residues 459-479 (GLWLYGLGFSAILAMVAMYFL) form a helical membrane-spanning segment. The Extracellular segment spans residues 480–486 (PLSKEQK). Residues 487–507 (YYKEIYSYLGFLMSIAWIYAT) form a helical membrane-spanning segment. The Cytoplasmic portion of the chain corresponds to 508 to 510 (SNE). A helical membrane pass occupies residues 511–531 (IVSVVTMIGVVTGLSMELLGL). Over 532 to 559 (TIMAWSNCIGDIVADIAVVKQGYPKMAM) the chain is Extracellular. A helical transmembrane segment spans residues 560–580 (AAAIGGPLFNLLIGFGLPFTI). Residues 581–595 (AAAQGKEMELLINPV) lie on the Cytoplasmic side of the membrane. A helical membrane pass occupies residues 596–616 (YRLLMLFLGISLVTTFVALFI). Topologically, residues 617 to 626 (QRFTVRRPHA) are extracellular. The chain crosses the membrane as a helical span at residues 627 to 647 (VLLIFIFVVFLIFICLAEFHV). Over 648–651 (LEWN) the chain is Cytoplasmic.

Belongs to the Ca(2+):cation antiporter (CaCA) (TC 2.A.19) family. SLC24A subfamily. Expressed in the seam cells of the organism. Expression is visible in the seam cells across all larval stages, and expression persists into the adult stage of the organism.

The protein localises to the mitochondrion inner membrane. Its activity is regulated as follows. Inhibited by the sodium/calcium exchanger inhibitor CGP-37157. Its function is as follows. Mitochondrial sodium/calcium antiporter that mediates sodium-dependent calcium efflux from mitochondrion, thereby acting as a key regulator of mitochondrion calcium homeostasis. Required for patterning of neural circuits: functions in the same pathway as RAC-dependent effectors of the unc-6/netrin signaling pathway to set left/ right patterning of the VD/DD GABAergic circuit. The chain is Mitochondrial sodium/calcium exchanger protein from Caenorhabditis elegans.